Consider the following 441-residue polypeptide: MTQPSLSVLYSDHLRTLTARADQALQRGGFDHLVIPSGTTHYQLFDDRDYPFAVNPQFKAWVPLTRMPHSWLVYTPGKRPTVIFYQPFDYWHVVPDAPSGWWVEHCDIHIIRTPEAALPLLPARTERCAILGEAASALGACVPNNPAAVLDFLDYQRAFKTPYELAVMRLAQQLAVRGHRAAEAAFRAGQSEFGIHMAYCSAVGQDANELPYGNIIALNEHGAVLHYTELGRQAPQPLRSFLIDAGASAHGYASDITRTYAADAGSEFQALIDAVDAAQLRMGNAVRAGMDYKQLHVDAHLSLMGILHDFGIITVSPEAALATGVSAAFFPHGLGHLIGLQVHDVAGFAASDRGGRIERPDGHPYLRLTRVLEPGMVVTIEPGVYFIDMLLDEVKKNGHAASVNWDRVAQFAPYGGIRIEDEVVCTDGDPENLTRPVFAAP.

Mn(2+) contacts are provided by D244, D255, H336, E381, and E420.

This sequence belongs to the peptidase M24B family. Bacterial-type prolidase subfamily. Mn(2+) is required as a cofactor.

The enzyme catalyses Xaa-L-Pro dipeptide + H2O = an L-alpha-amino acid + L-proline. In terms of biological role, splits dipeptides with a prolyl residue in the C-terminal position. The polypeptide is Xaa-Pro dipeptidase (Xanthomonas campestris pv. campestris (strain 8004)).